The chain runs to 346 residues: Fe(3+) ions import ATP-binding protein FbpC 2 (346 aa).

Positions 5–235 constitute an ABC transporter domain; the sequence is LEVDGVDKSF…PVDVPTAEFI (231 aa). 37 to 44 lines the ATP pocket; it reads GPSGCGKT.

Belongs to the ABC transporter superfamily. Fe(3+) ion importer (TC 3.A.1.10) family. The complex is composed of two ATP-binding proteins (FbpC), two transmembrane proteins (FbpB) and a solute-binding protein (FbpA).

The protein resides in the cell membrane. The enzyme catalyses Fe(3+)(out) + ATP + H2O = Fe(3+)(in) + ADP + phosphate + H(+). Its function is as follows. Part of the ABC transporter complex FbpABC involved in Fe(3+) ions import. Responsible for energy coupling to the transport system. The polypeptide is Fe(3+) ions import ATP-binding protein FbpC 2 (Rhodococcus jostii (strain RHA1)).